The primary structure comprises 169 residues: MSDNTLYLRREKRFLVLLGIICLALIGGALYMQIVLGEAPCPLCILQRYALLFIAIFAFIGAAMSGRRGVTVCETLVTLSALGGIAAAGRHVWILAHPSDSCGIDVLQPIVDGLPLATLFPTGFQVSGFCTTPYPPVLGLSLAQWALAAFVLTAVLVPACIIRNRRKPY.

The Cytoplasmic portion of the chain corresponds to 1–14; the sequence is MSDNTLYLRREKRF. The helical transmembrane segment at 15-31 threads the bilayer; the sequence is LVLLGIICLALIGGALY. Over 32 to 49 the chain is Periplasmic; it reads MQIVLGEAPCPLCILQRY. An intrachain disulfide couples cysteine 41 to cysteine 44. A helical membrane pass occupies residues 50 to 64; sequence ALLFIAIFAFIGAAM. Over 65–71 the chain is Cytoplasmic; sequence SGRRGVT. The helical transmembrane segment at 72–89 threads the bilayer; it reads VCETLVTLSALGGIAAAG. The Periplasmic portion of the chain corresponds to 90-144; the sequence is RHVWILAHPSDSCGIDVLQPIVDGLPLATLFPTGFQVSGFCTTPYPPVLGLSLAQ. A disulfide bridge connects residues cysteine 102 and cysteine 130. A helical transmembrane segment spans residues 145–163; the sequence is WALAAFVLTAVLVPACIIR. At 164 to 169 the chain is on the cytoplasmic side; that stretch reads NRRKPY.

This sequence belongs to the DsbB family.

Its subcellular location is the cell inner membrane. Its function is as follows. Required for disulfide bond formation in some periplasmic proteins. Acts by oxidizing the DsbA protein. The polypeptide is Disulfide bond formation protein B 1 (Pseudomonas savastanoi pv. phaseolicola (strain 1448A / Race 6) (Pseudomonas syringae pv. phaseolicola (strain 1448A / Race 6))).